Here is a 713-residue protein sequence, read N- to C-terminus: Leucine-rich repeat-containing protein 4B (713 aa).

The first 35 residues, 1–35, serve as a signal peptide directing secretion; that stretch reads MARARGSPCPPLPPGRMSWPHGALLFLWLFSPPLG. Over 36–576 the chain is Extracellular; the sequence is AGGGGVAVTS…DLDDVMKTTK (541 aa). Residues 48-86 form the LRRNT domain; sequence GGGSPPATSCPVACSCSNQASRVICTRRDLAEVPASIPV. 9 LRR repeats span residues 87–108, 111–132, 135–156, 159–180, 183–205, 208–229, 230–251, 254–275, and 278–299; these read NTRYLNLQENGIQVIRTDTFKH, HLEILQLSKNLVRKIEVGAFNG, SLNTLELFDNRLTTVPTQAFEY, KLRELWLRNNPIESIPSYAFNR, SLRRLDLGELKRLEYISEAAFEG, NLRYLNLGMCNLKDIPNLTALV, RLEELELSGNRLDLIRPGSFQG, SLRKLWLMHAQVATIERNAFDD, and SLEELNLSHNNLMSLPHDLFTP. Asparagine 224 carries an N-linked (GlcNAc...) asparagine glycan. N-linked (GlcNAc...) asparagine glycans are attached at residues asparagine 283, asparagine 333, asparagine 374, asparagine 400, asparagine 422, asparagine 425, asparagine 444, and asparagine 452. An LRRCT domain is found at 311–363; that stretch reads NPWHCNCDVLWLSWWLKETVPSNTTCCARCHAPAGLKGRYIGELDQSHFTCYA. Positions 364-452 constitute an Ig-like C2-type domain; it reads PVIVEPPTDL…GNTTASATLN (89 aa). A disulfide bridge connects residues cysteine 385 and cysteine 436. The disordered stretch occupies residues 497–551; sequence TQPGEEALQPRGTEKEPPGPTTDGVWGGGRPGDAAGPASSSTTAPAPRSSRPTEK. The segment covering 528-546 has biased composition (low complexity); sequence GDAAGPASSSTTAPAPRSS. A helical membrane pass occupies residues 577 to 597; it reads IIIGCFVAITFMAAVMLVAFY. Residues 598 to 713 are Cytoplasmic-facing; that stretch reads KLRKQHQLHK…SKENVQETQI (116 aa). Residue serine 693 is modified to Phosphoserine. Residues 694–713 are disordered; it reads IHEPLLFKSGSKENVQETQI. Residues 703–713 show a composition bias toward basic and acidic residues; it reads GSKENVQETQI.

As to quaternary structure, interacts with PTPRF. Interacts with DLG4. N-glycosylated. O-glycosylated; contains sialic acid.

Its subcellular location is the membrane. It localises to the presynaptic cell membrane. Synaptic adhesion protein. Regulates the formation of excitatory synapses. The trans-synaptic adhesion between LRRC4B and PTPRF regulates the formation of excitatory synapses in a bidirectional manner. The protein is Leucine-rich repeat-containing protein 4B (LRRC4B) of Homo sapiens (Human).